Reading from the N-terminus, the 1177-residue chain is DNA-directed RNA polymerase subunit beta (1177 aa).

Residues 1147 to 1161 (DDTEIEMRDTEDDDD) are compositionally biased toward acidic residues. The interval 1147–1177 (DDTEIEMRDTEDDDDHQSADKLNVEVETTKE) is disordered. Residues 1162–1177 (HQSADKLNVEVETTKE) are compositionally biased toward basic and acidic residues.

It belongs to the RNA polymerase beta chain family. As to quaternary structure, the RNAP catalytic core consists of 2 alpha, 1 beta, 1 beta' and 1 omega subunit. When a sigma factor is associated with the core the holoenzyme is formed, which can initiate transcription.

It catalyses the reaction RNA(n) + a ribonucleoside 5'-triphosphate = RNA(n+1) + diphosphate. DNA-dependent RNA polymerase catalyzes the transcription of DNA into RNA using the four ribonucleoside triphosphates as substrates. This is DNA-directed RNA polymerase subunit beta from Bacillus thuringiensis (strain Al Hakam).